Here is a 278-residue protein sequence, read N- to C-terminus: Transmembrane protein 45B (278 aa).

Helical transmembrane passes span 7-27 (HALPGSFFLIVGLWWSVKYPL), 49-69 (IIEGAVKTLFAIIGILAEQFV), 95-115 (YLFFGVSGLMDMITYLYFHIV), 117-137 (LGLDRVVLAMAVFIEGFLFYF), 149-169 (IHSLLLFGLFGAAVSISLEVI), 183-203 (LLILQGTWFWQIGFVLFPPFG), and 215-235 (IMFITMCFCWHYLVALCIVAI). Serine 273 and serine 275 each carry phosphoserine.

The protein belongs to the TMEM45 family.

It is found in the endosome membrane. Its subcellular location is the lysosome membrane. The protein resides in the golgi apparatus. The protein localises to the trans-Golgi network membrane. Functionally, plays a role in innate immunity. The sequence is that of Transmembrane protein 45B (Tmem45b) from Mus musculus (Mouse).